Consider the following 1050-residue polypeptide: Toll-like receptor 7 (1050 aa).

A signal peptide spans 1–26 (MVFSMWTRKRQILIFLNMLLVSRVFG). At 27–837 (FRWFPKTLPC…SLDLYTCELD (811 aa)) the chain is on the extracellular side. LRR repeat units lie at residues 42 to 64 (IPEA…EGIP), 65 to 87 (TNTT…SFRR), 89 to 111 (NHLE…KANV), 126 to 149 (LSDL…LPSS), 151 to 170 (HLLS…NLTE), 171 to 195 (LVNI…SYSI), 203 to 226 (MRNL…LPPN), 228 to 247 (LELY…DFNN), 248 to 273 (LNEL…CTPC), 275 to 289 (NNSP…FNSL), 290 to 312 (TELK…WFKN), 314 to 337 (RNLQ…KFLH), 339 to 364 (LPNL…TLPH), 369 to 392 (LENL…SLSV), 396 to 419 (LPRL…IFKH), 421 to 443 (ENLK…REVG), 493 to 516 (HIYG…DFQH), 517 to 542 (LSFL…LWPL), 543 to 565 (RELR…AFEE), and 567 to 589 (QSLE…ITHM). 2 N-linked (GlcNAc...) asparagine glycosylation sites follow: asparagine 66 and asparagine 69. Asparagine 167, asparagine 190, and asparagine 215 each carry an N-linked (GlcNAc...) asparagine glycan. The N-linked (GlcNAc...) asparagine glycan is linked to asparagine 387. 2 N-linked (GlcNAc...) asparagine glycosylation sites follow: asparagine 524 and asparagine 535. A glycan (N-linked (GlcNAc...) asparagine) is linked at asparagine 591. 8 LRR repeats span residues 596 to 619 (LRLL…TMES), 620 to 645 (DSLR…RYLD), 650 to 673 (LFNL…VFEG), 675 to 698 (PPNL…RLQL), 699 to 722 (LKHL…LANC), 724 to 746 (KSLT…FLED), 747 to 770 (ALQL…SFPE), and 773 to 796 (LNNL…VWFV). N-linked (GlcNAc...) asparagine glycosylation is found at asparagine 680 and asparagine 721. N-linked (GlcNAc...) asparagine glycosylation is present at asparagine 800. A helical membrane pass occupies residues 838–858 (LTNLILFSVSISSVLFLMVVM). At 859–1050 (TTSHLFFWDM…AYSQMFKETV (192 aa)) the chain is on the cytoplasmic side. The TIR domain maps to 890 to 1034 (SCYDAFIVYD…YFWQCLKNAL (145 aa)).

The protein belongs to the Toll-like receptor family. In terms of assembly, homodimer. Interacts with MYD88 via their respective TIR domains. Interacts with UNC93B1. Interacts with SMPDL3B. Post-translationally, the first cleavage is performed by asparagine endopeptidase or cathepsin family members. This initial cleavage event is followed by a trimming event that is solely cathepsin mediated and required for optimal receptor signaling.

The protein resides in the endosome membrane. It localises to the endoplasmic reticulum membrane. It is found in the lysosome. The protein localises to the cytoplasmic vesicle. Its subcellular location is the phagosome. With respect to regulation, activated by guanosine analogs including deoxyguanosine, 7-thia-8-oxoguanosine or 7-deazaguanosine in a RNA-independent manner. Endosomal receptor that plays a key role in innate and adaptive immunity. Controls host immune response against pathogens through recognition of uridine-containing single strand RNAs (ssRNAs) of viral origin or guanosine analogs. Upon binding to agonists, undergoes dimerization that brings TIR domains from the two molecules into direct contact, leading to the recruitment of TIR-containing downstream adapter MYD88 through homotypic interaction. In turn, the Myddosome signaling complex is formed involving IRAK4, IRAK1, TRAF6, TRAF3 leading to activation of downstream transcription factors NF-kappa-B and IRF7 to induce pro-inflammatory cytokines and interferons, respectively. In plasmacytoid dendritic cells, RNASET2 endonuclease cooperates with PLD3 or PLD4 5'-&gt;3' exonucleases to process RNA and release 2',3'-cyclic guanosine monophosphate (2',3'-cGMP) and cytidine-rich RNA fragments that occupy TLR7 ligand-binding pockets and trigger a signaling-competent state. This Mus musculus (Mouse) protein is Toll-like receptor 7 (Tlr7).